A 107-amino-acid polypeptide reads, in one-letter code: Proteinase inhibitor I-A (107 aa).

The signal sequence occupies residues 1–22; sequence MVKFAHVVAFLLLASLIQPLTA. Positions 23-36 are excised as a propeptide; that stretch reads RDLEINVLQLDVSQ.

It belongs to the protease inhibitor I13 (potato type I serine protease inhibitor) family.

It localises to the secreted. In Nicotiana tabacum (Common tobacco), this protein is Proteinase inhibitor I-A (TIMPB).